A 315-amino-acid chain; its full sequence is 3-chlorobenzoate-3,4-dioxygenase reductase subunit (315 aa).

An FMN-binding site is contributed by 1–103; it reads MVAIDQHDTY…GATTRISAPR (103 aa). Residues 7–109 form the FAD-binding FR-type domain; the sequence is HDTYSVRVIS…SAPRNAFALD (103 aa). Residues 228 to 315 enclose the 2Fe-2S ferredoxin-type domain; that stretch reads NEFTVNLARS…ALSPELTLDL (88 aa). [2Fe-2S] cluster contacts are provided by Cys264, Cys269, Cys272, and Cys302.

The protein belongs to the PDR/VanB family. As to quaternary structure, this dioxygenase system consists of two proteins: phthalate oxygenase and phthalate oxygenase reductase. The cofactor is FMN.

In Comamonas testosteroni (Pseudomonas testosteroni), this protein is 3-chlorobenzoate-3,4-dioxygenase reductase subunit (cbaB).